The chain runs to 583 residues: 2-succinyl-5-enolpyruvyl-6-hydroxy-3-cyclohexene-1-carboxylate synthase (583 aa).

This sequence belongs to the TPP enzyme family. MenD subfamily. In terms of assembly, homodimer. Mg(2+) is required as a cofactor. It depends on Mn(2+) as a cofactor. Requires thiamine diphosphate as cofactor.

It carries out the reaction isochorismate + 2-oxoglutarate + H(+) = 5-enolpyruvoyl-6-hydroxy-2-succinyl-cyclohex-3-ene-1-carboxylate + CO2. Its pathway is quinol/quinone metabolism; 1,4-dihydroxy-2-naphthoate biosynthesis; 1,4-dihydroxy-2-naphthoate from chorismate: step 2/7. It functions in the pathway cofactor biosynthesis; phylloquinone biosynthesis. Catalyzes the thiamine diphosphate-dependent decarboxylation of 2-oxoglutarate and the subsequent addition of the resulting succinic semialdehyde-thiamine pyrophosphate anion to isochorismate to yield 2-succinyl-5-enolpyruvyl-6-hydroxy-3-cyclohexene-1-carboxylate (SEPHCHC). The protein is 2-succinyl-5-enolpyruvyl-6-hydroxy-3-cyclohexene-1-carboxylate synthase of Trichormus variabilis (strain ATCC 29413 / PCC 7937) (Anabaena variabilis).